Here is a 1395-residue protein sequence, read N- to C-terminus: Adventurous-gliding motility protein Z (1395 aa).

The 119-residue stretch at 4–122 (RVLIVESEHD…ELAALSHGIV (119 aa)) folds into the Response regulatory domain. Aspartate 48 is modified (4-aspartylphosphate). Disordered stretches follow at residues 137–172 (LNGT…AMTE), 874–893 (AAES…GLRS), 919–947 (EQHA…ARAH), 1212–1249 (AAES…AAKQ), 1287–1312 (RYKS…EDDE), and 1326–1395 (AAAA…ELDK). A coiled-coil region spans residues 213–911 (EGKIQILRDE…LEQTHGQLAA (699 aa)). 2 stretches are compositionally biased toward basic and acidic residues: residues 919–928 (EQHAHQESRK) and 1228–1249 (QKER…AAKQ). 2 stretches are compositionally biased toward low complexity: residues 1291–1306 (KSAT…AKPA) and 1326–1352 (AAAA…KKAP). Positions 1382–1395 (EDDDWTALVDELDK) are enriched in acidic residues.

Interacts with MglA.

Its subcellular location is the cytoplasm. In terms of biological role, required for adventurous-gliding motility (A motility), in response to environmental signals sensed by the frz chemosensory system. Forms ordered clusters that span the cell length and that remain stationary relative to the surface across which the cells move, serving as anchor points (focal, transient adhesion sites) that allow the bacterium to move forward. Clusters disassemble at the lagging cell pole. The protein is Adventurous-gliding motility protein Z (aglZ) of Myxococcus xanthus (strain DK1622).